Here is a 139-residue protein sequence, read N- to C-terminus: 10 kDa chaperonin 2, chloroplastic (139 aa).

The N-terminal 39 residues, 1-39 (MASTFVCSLPNPFFAFPVKATTPSTANHTLLGSRRGCLR), are a transit peptide targeting the chloroplast. Positions 51–138 (KVVPQADRVL…CKESDLLALV (88 aa)) are cpn-10 domain.

The protein belongs to the GroES chaperonin family. In terms of tissue distribution, expressed in leaves and stems. Expressed at low levels in germinating seeds, seedlings, rosettes leaves, flowers and siliques.

It localises to the plastid. Its subcellular location is the chloroplast stroma. Functionally, functions as a co-chaperone for protein folding in chloroplasts. The sequence is that of 10 kDa chaperonin 2, chloroplastic from Arabidopsis thaliana (Mouse-ear cress).